An 88-amino-acid chain; its full sequence is uncharacterized protein (88 aa).

This sequence to E.coli YihD.

This is an uncharacterized protein from Haemophilus influenzae (strain ATCC 51907 / DSM 11121 / KW20 / Rd).